The primary structure comprises 254 residues: D-aminoacyl-tRNA deacylase (254 aa).

The protein belongs to the DtdA deacylase family. Monomer. Zn(2+) serves as cofactor.

It carries out the reaction a D-aminoacyl-tRNA + H2O = a tRNA + a D-alpha-amino acid + H(+). The catalysed reaction is glycyl-tRNA(Ala) + H2O = tRNA(Ala) + glycine + H(+). Functionally, D-aminoacyl-tRNA deacylase with broad substrate specificity. By recycling D-aminoacyl-tRNA to D-amino acids and free tRNA molecules, this enzyme counteracts the toxicity associated with the formation of D-aminoacyl-tRNA entities in vivo. In Methanococcus vannielii (strain ATCC 35089 / DSM 1224 / JCM 13029 / OCM 148 / SB), this protein is D-aminoacyl-tRNA deacylase.